Here is a 129-residue protein sequence, read N- to C-terminus: Small ribosomal subunit protein uS11 (129 aa).

Belongs to the universal ribosomal protein uS11 family. As to quaternary structure, part of the 30S ribosomal subunit. Interacts with proteins S7 and S18. Binds to IF-3.

Functionally, located on the platform of the 30S subunit, it bridges several disparate RNA helices of the 16S rRNA. Forms part of the Shine-Dalgarno cleft in the 70S ribosome. In Staphylococcus carnosus (strain TM300), this protein is Small ribosomal subunit protein uS11.